The sequence spans 468 residues: UDP-N-acetylmuramoyl-L-alanine--L-glutamate ligase (468 aa).

122-128 (GTKGKST) lines the ATP pocket.

This sequence belongs to the MurCDEF family. MurD2 subfamily.

It localises to the cytoplasm. It catalyses the reaction UDP-N-acetyl-alpha-D-muramoyl-L-alanine + L-glutamate + ATP = UDP-N-acetyl-alpha-D-muramoyl-L-alanyl-L-glutamate + ADP + phosphate + H(+). The protein operates within cell wall biogenesis; peptidoglycan biosynthesis. In terms of biological role, cell wall formation. Catalyzes the addition of L-glutamate to the nucleotide precursor UDP-N-acetylmuramoyl-L-alanine. This is UDP-N-acetylmuramoyl-L-alanine--L-glutamate ligase from Xanthomonas euvesicatoria pv. vesicatoria (strain 85-10) (Xanthomonas campestris pv. vesicatoria).